The chain runs to 423 residues: Histidine--tRNA ligase (423 aa).

It belongs to the class-II aminoacyl-tRNA synthetase family. In terms of assembly, homodimer.

The protein resides in the cytoplasm. The catalysed reaction is tRNA(His) + L-histidine + ATP = L-histidyl-tRNA(His) + AMP + diphosphate + H(+). This chain is Histidine--tRNA ligase, found in Anoxybacillus flavithermus (strain DSM 21510 / WK1).